The following is a 421-amino-acid chain: MSKTHLTEQKFSDFALHPKVVEALEKKGFHNCTPIQALALPLTLAGRDVAGQAQTGTGKTMAFLTSTFHYLLSHPAIADRKVNQPRALIMAPTRELAVQIHADAEPLAEATGLKLGLAYGGDGYDKQLKVLESGVDILIGTTGRLIDYAKQNHINLGAIQVVVLDEADRMYDLGFIKDIRWLFRRMPPANQRLNMLFSATLSYRVRELAFEQMNNAEYIEVEPEQKTGHRIKEELFYPSNEEKMRLLQTLIEEEWPDRAIIFANTKHRCEEIWGHLAADGHRVGLLTGDVAQKKRLRILDEFTRGDLDILVATDVAARGLHIPAVTHVFNYDLPDDCEDYVHRIGRTGRAGASGHSISLACEEYALNLPAIENYIGHSILVSKYNPDALMTDLPKPLRLTRARTGNGPRRTGAPRNRRRSG.

Residues 9–37 (QKFSDFALHPKVVEALEKKGFHNCTPIQA) carry the Q motif motif. The Helicase ATP-binding domain occupies 40–219 (LPLTLAGRDV…FEQMNNAEYI (180 aa)). 53 to 60 (AQTGTGKT) lines the ATP pocket. A DEAD box motif is present at residues 165-168 (DEAD). Residues 245-390 (RLLQTLIEEE…VSKYNPDALM (146 aa)) form the Helicase C-terminal domain. The tract at residues 395–421 (KPLRLTRARTGNGPRRTGAPRNRRRSG) is disordered. Low complexity predominate over residues 402-414 (ARTGNGPRRTGAP).

It belongs to the DEAD box helicase family. RhlB subfamily. As to quaternary structure, component of the RNA degradosome, which is a multiprotein complex involved in RNA processing and mRNA degradation.

It localises to the cytoplasm. The enzyme catalyses ATP + H2O = ADP + phosphate + H(+). DEAD-box RNA helicase involved in RNA degradation. Has RNA-dependent ATPase activity and unwinds double-stranded RNA. In Shigella flexneri serotype 5b (strain 8401), this protein is ATP-dependent RNA helicase RhlB.